A 1048-amino-acid chain; its full sequence is MLRASAMRAAVLHLTVALAALLSSCTTVSCLKIVPEEKQLILAEGSSLSLTCAGSSETTWDLKSDDVPFFQMKAESSDLNYKIVQSNSTASVLTLWHVDWKNTAVYQCREQLTGEIKEVAVFVPDRFSPQTLRFIESSHGMVTKTSGESTVPCVVTNPNITVTLYDKDTDLPVNGVYVPSEGFKAYLDYRTYVCRGELNGEVKESQAFNVYSIHVPEDIDAYVNASQTVLKQGEPLTVNCTVQGVELVLFSWDIPNRDIVKHKPETVVLSATTMRSCLVFPHATVAHSGTYVCHAHESTQDQKAFASVNITVLERGFVAVKSTRKQNITAELQENVELRVEIEAYPPPQIRWKKDGAPVRGDKTIIIRQEHEIRYVTILTLVRVRTEQKGLYTALITNEDDVKEVTFALEVQVLARIKDLTDHHLPGKKQLVTCVAEGVPTPTIQWYSCDSMLKCNNQTSLWQQLKADPELLSIHTSVTEARQTNQVRSQVTFFKPQHTTVRCETTNQEGLIDFRDVKLVSSSLFSQVVLLAVVLTLVPIIIMSIIILIAVWKKKPRYEIRWKVIESVSQDGHEYIYVDPIHLPYDLAWEMPRDNLVLGRTLGSGAFGRVVEATAHGLSHSQSSIKVAVKMLKATARRSETQALMSELKIMSHLGPHLNIVNLLAACTKHGPLYLVTEYCRYGDLVDYLHRNKHTFLQYYLDKNQDDGSLISGGSTPLSQRKGYVSFGSESDGGYMDMSKDEPAVYVPMQEQMDTIKYADIQPSPYESPYQQDLYQEQGGGRVDLVISDSPALTYDDLLGFSYQVAKGMEFLASKNCVHRDLAARNVLICEGKLVKICDFGLARDIMHDSNYISKGSTFLPLKWMAPESIFHNLYTTLSDVWSYGILLWEIFTLGGTPYPDLPMNELFYSPLKRGYRMAKPAHASDEVYEIMKRCWDETFEKRPDFSFLVHCVGDMLTDSYKKKYSQVNETFLKSDHPAVARTKPRLSSPFPIANPAFGSPSLVGLSDFPDPYNQNTRRFRNEAEVQEGVTSFNEYIIPIPDPKPEKS.

Positions 1-30 are cleaved as a signal peptide; it reads MLRASAMRAAVLHLTVALAALLSSCTTVSC. Over 31–528 the chain is Extracellular; the sequence is LKIVPEEKQL…LVSSSLFSQV (498 aa). One can recognise an Ig-like C2-type 1 domain in the interval 35–124; it reads PEEKQLILAE…EIKEVAVFVP (90 aa). Intrachain disulfides connect Cys-52–Cys-108 and Cys-153–Cys-194. Residues Asn-87, Asn-159, Asn-224, and Asn-239 are each glycosylated (N-linked (GlcNAc...) asparagine). Ig-like C2-type domains follow at residues 216-309 and 319-406; these read PEDI…ASVN and AVKS…KEVT. Residues Cys-240 and Cys-293 are joined by a disulfide bond. 3 N-linked (GlcNAc...) asparagine glycosylation sites follow: Asn-309, Asn-327, and Asn-457. An intrachain disulfide couples Cys-434 to Cys-503. A helical transmembrane segment spans residues 529 to 549; sequence VLLAVVLTLVPIIIMSIIILI. Residues 550-1048 are Cytoplasmic-facing; sequence AVWKKKPRYE…PIPDPKPEKS (499 aa). Residues Tyr-558, Tyr-575, and Tyr-577 each carry the phosphotyrosine; by autocatalysis modification. Residues 596–957 enclose the Protein kinase domain; sequence LVLGRTLGSG…FLVHCVGDML (362 aa). Residues 602–610 and Lys-630 each bind ATP; that span reads LGSGAFGRV. Tyr-735, Tyr-746, Tyr-758, Tyr-766, and Tyr-770 each carry phosphotyrosine; by autocatalysis. Asp-821 functions as the Proton acceptor in the catalytic mechanism. Phosphotyrosine; by autocatalysis is present on residues Tyr-852 and Tyr-1036.

This sequence belongs to the protein kinase superfamily. Tyr protein kinase family. CSF-1/PDGF receptor subfamily. In terms of assembly, interacts with homodimeric PDGFB and PDGFD, and with heterodimers formed by PDGFA and PDGFB. Monomer in the absence of bound ligand. Interaction with homodimeric PDGFB, heterodimers formed by PDGFA and PDGFB or homodimeric PDGFD, leads to receptor dimerization, where both PDGFRA homodimers and heterodimers with PDGFRB are observed. Post-translationally, ubiquitinated. After autophosphorylation, the receptor is polyubiquitinated, leading to its degradation. Autophosphorylated on tyrosine residues upon ligand binding. Autophosphorylation occurs in trans, i.e. one subunit of the dimeric receptor phosphorylates tyrosine residues on the other subunit.

It localises to the cell membrane. The protein resides in the cytoplasmic vesicle. The protein localises to the lysosome lumen. The enzyme catalyses L-tyrosyl-[protein] + ATP = O-phospho-L-tyrosyl-[protein] + ADP + H(+). With respect to regulation, present in an inactive conformation in the absence of bound ligand. Binding of PDGFB and/or PDGFD leads to dimerization and activation by autophosphorylation on tyrosine residues. Its function is as follows. Tyrosine-protein kinase that acts as a cell-surface receptor for homodimeric PDGFB and PDGFD and for heterodimers formed by PDGFA and PDGFB, and plays an essential role in the regulation of embryonic development, cell proliferation, survival, differentiation, chemotaxis and migration. Plays an essential role in blood vessel development by promoting proliferation, migration and recruitment of pericytes and smooth muscle cells to endothelial cells. Required for normal development of the cardiovascular system. Required for normal recruitment of pericytes (mesangial cells) in the kidney glomerulus, and for normal formation of a branched network of capillaries in kidney glomeruli. Promotes rearrangement of the actin cytoskeleton and the formation of membrane ruffles. Binding of its cognate ligands - homodimeric PDGFB, heterodimers formed by PDGFA and PDGFB or homodimeric PDGFD -leads to the activation of several signaling cascades; the response depends on the nature of the bound ligand and is modulated by the formation of heterodimers between PDGFRA and PDGFRB. Receptor signaling is down-regulated by protein phosphatases that dephosphorylate the receptor and its down-stream effectors, and by rapid internalization of the activated receptor. This is Platelet-derived growth factor receptor beta (pdgfrb) from Takifugu rubripes (Japanese pufferfish).